The sequence spans 535 residues: Tetrathionate hydrolase (535 aa).

The N-terminal stretch at 1–39 is a signal peptide; the sequence is MNLKILVGLFILGIIILSAMTFLNFTTIVAQDKGDQQPK. N-linked (GlcNAc...) asparagine glycosylation is present at Asn50.

The protein belongs to the tetrathionate hydrolase family. In terms of assembly, monomer and homodimer; in equilibrium.

It localises to the cell surface. It carries out the reaction tetrathionate + H2O = sulfur + thiosulfate + sulfate + H(+). Functionally, catalyzes the hydrolysis of tetrathionate to generate elemental sulfur, thiosulfate and sulfate. This is Tetrathionate hydrolase from Acidianus ambivalens (Desulfurolobus ambivalens).